We begin with the raw amino-acid sequence, 237 residues long: 2,3-bisphosphoglycerate-dependent phosphoglycerate mutase (237 aa).

Residues 8–15 (RHGQSQWN), 21–22 (TG), R60, 87–90 (ERHY), K98, 114–115 (RR), and 180–181 (GN) each bind substrate. Residue H9 is the Tele-phosphohistidine intermediate of the active site. The active-site Proton donor/acceptor is E87.

It belongs to the phosphoglycerate mutase family. BPG-dependent PGAM subfamily. Homodimer.

The enzyme catalyses (2R)-2-phosphoglycerate = (2R)-3-phosphoglycerate. Its pathway is carbohydrate degradation; glycolysis; pyruvate from D-glyceraldehyde 3-phosphate: step 3/5. Its function is as follows. Catalyzes the interconversion of 2-phosphoglycerate and 3-phosphoglycerate. The chain is 2,3-bisphosphoglycerate-dependent phosphoglycerate mutase from Caulobacter vibrioides (strain ATCC 19089 / CIP 103742 / CB 15) (Caulobacter crescentus).